Reading from the N-terminus, the 957-residue chain is Vacuolar membrane protease (957 aa).

The Cytoplasmic portion of the chain corresponds to 1–10 (MARYNPFSFT). Residues 11-31 (PGPVVFFTTVIYVGLFAALLV) traverse the membrane as a helical segment. At 32 to 369 (THLTVPDYPS…RVFVVFQLHT (338 aa)) the chain is on the vacuolar side. 3 N-linked (GlcNAc...) asparagine glycosylation sites follow: Asn48, Asn105, and Asn136. Residues His152 and Asp164 each coordinate Zn(2+). The Proton acceptor role is filled by Glu198. 3 residues coordinate Zn(2+): Glu199, Glu224, and His297. The chain crosses the membrane as a helical span at residues 370-390 (LFALCVTLLVVAPIALIGLTF). Residues 391–423 (GLSKADKNYLLARKAFVYSSDDDNPVQLYGWRG) lie on the Cytoplasmic side of the membrane. A helical membrane pass occupies residues 424–444 (FFRFPIVFVSATAVVVALAYL). Topologically, residues 445-450 (LVRFNA) are vacuolar. The helical transmembrane segment at 451-471 (FIIYSSPFAVWSMMLSAWFFV) threads the bilayer. The Cytoplasmic segment spans residues 472 to 490 (AWFFSRGADAMRPSALQRM). A helical transmembrane segment spans residues 491–511 (YALIWLFIGSFVLLTIITVFV). Topologically, residues 512–521 (NNYQVVAGYP) are vacuolar. The chain crosses the membrane as a helical span at residues 522–542 (ALFYFAVVFAALMLSYLELFF). Residues 543–642 (APTKSAYARH…YPGEQEWSGK (100 aa)) are Cytoplasmic-facing. Disordered stretches follow at residues 560 to 591 (RRNS…DATE) and 603 to 628 (FTRY…RRLD). The span at 564–577 (ESASRPLTGSTTAA) shows a compositional bias: polar residues. Residues 643-663 (LPSWIWIIQLLLLAPLVIVLV) traverse the membrane as a helical segment. Residues 664 to 685 (GQVALLLTSALYQTPSDGNSPL) lie on the Vacuolar side of the membrane. Residues 686–706 (FIYLAIAALSVLLLAPTGPFI) form a helical membrane-spanning segment. At 707–713 (HRFTYHV) the chain is on the cytoplasmic side. A helical transmembrane segment spans residues 714-734 (PTFLFLVCLATVIYNLVAFPF). The Vacuolar segment spans residues 735-957 (SRDHRLKVYF…LVEGFKQFEI (223 aa)). N-linked (GlcNAc...) asparagine glycosylation is found at Asn782, Asn818, and Asn834.

This sequence belongs to the peptidase M28 family. Requires Zn(2+) as cofactor.

Its subcellular location is the vacuole membrane. Its function is as follows. May be involved in vacuolar sorting and osmoregulation. The chain is Vacuolar membrane protease from Pyrenophora tritici-repentis (strain Pt-1C-BFP) (Wheat tan spot fungus).